Here is a 257-residue protein sequence, read N- to C-terminus: Thiazole synthase (257 aa).

Catalysis depends on Lys-96, which acts as the Schiff-base intermediate with DXP. 1-deoxy-D-xylulose 5-phosphate contacts are provided by residues Gly-157, 184–185 (AG), and 206–207 (NT).

Belongs to the ThiG family. As to quaternary structure, homotetramer. Forms heterodimers with either ThiH or ThiS.

The protein resides in the cytoplasm. It catalyses the reaction [ThiS sulfur-carrier protein]-C-terminal-Gly-aminoethanethioate + 2-iminoacetate + 1-deoxy-D-xylulose 5-phosphate = [ThiS sulfur-carrier protein]-C-terminal Gly-Gly + 2-[(2R,5Z)-2-carboxy-4-methylthiazol-5(2H)-ylidene]ethyl phosphate + 2 H2O + H(+). Its pathway is cofactor biosynthesis; thiamine diphosphate biosynthesis. In terms of biological role, catalyzes the rearrangement of 1-deoxy-D-xylulose 5-phosphate (DXP) to produce the thiazole phosphate moiety of thiamine. Sulfur is provided by the thiocarboxylate moiety of the carrier protein ThiS. In vitro, sulfur can be provided by H(2)S. The chain is Thiazole synthase from Allorhizobium ampelinum (strain ATCC BAA-846 / DSM 112012 / S4) (Agrobacterium vitis (strain S4)).